Reading from the N-terminus, the 120-residue chain is NAD(P)H-quinone oxidoreductase subunit 3, chloroplastic (120 aa).

3 helical membrane passes run 9–29, 64–84, and 88–108; these read FFWA…FISG, MFAL…PWAM, and VLGV…IIGL.

The protein belongs to the complex I subunit 3 family. As to quaternary structure, NDH is composed of at least 16 different subunits, 5 of which are encoded in the nucleus.

It is found in the plastid. It localises to the chloroplast thylakoid membrane. It catalyses the reaction a plastoquinone + NADH + (n+1) H(+)(in) = a plastoquinol + NAD(+) + n H(+)(out). The catalysed reaction is a plastoquinone + NADPH + (n+1) H(+)(in) = a plastoquinol + NADP(+) + n H(+)(out). NDH shuttles electrons from NAD(P)H:plastoquinone, via FMN and iron-sulfur (Fe-S) centers, to quinones in the photosynthetic chain and possibly in a chloroplast respiratory chain. The immediate electron acceptor for the enzyme in this species is believed to be plastoquinone. Couples the redox reaction to proton translocation, and thus conserves the redox energy in a proton gradient. The protein is NAD(P)H-quinone oxidoreductase subunit 3, chloroplastic of Atropa belladonna (Belladonna).